The primary structure comprises 108 residues: MADKYDVFDQLGELENTLNTTLTQISGIRQVLEASMTENATLRMELEKLRDRLAEFEKKEVKKETPKDQPNPNLIQIFNEGFHVCHLHYAERLAEGESCLDCLELLYR.

4 residues coordinate Zn(2+): His83, Cys85, Cys99, and Cys102.

Belongs to the YabA family. In terms of assembly, homotetramer. Interacts with both DnaA and DnaN, acting as a bridge between these two proteins. It depends on Zn(2+) as a cofactor.

It is found in the cytoplasm. The protein resides in the nucleoid. Functionally, involved in control of chromosome replication initiation. Inhibits the cooperative binding of DnaA to the oriC region, thus negatively regulating initiation of chromosome replication. Inhibits the ability of DnaA-ATP to form a helix on DNA; does not disassemble preformed DnaA-DNA helices. Decreases the residence time of DnaA on the chromosome at its binding sites (oriC, replication forks and promoter-binding sites). Tethers DnaA to the replication machinery via the DNA polymerase beta sliding clamp subunit (dnaN). Associates with oriC and other DnaA targets on the chromosome in a DnaA-dependent manner. The protein is Replication initiation control protein YabA of Lactococcus lactis subsp. cremoris (strain SK11).